The sequence spans 232 residues: 2-C-methyl-D-erythritol 4-phosphate cytidylyltransferase (232 aa).

The protein belongs to the IspD/TarI cytidylyltransferase family. IspD subfamily.

It carries out the reaction 2-C-methyl-D-erythritol 4-phosphate + CTP + H(+) = 4-CDP-2-C-methyl-D-erythritol + diphosphate. The protein operates within isoprenoid biosynthesis; isopentenyl diphosphate biosynthesis via DXP pathway; isopentenyl diphosphate from 1-deoxy-D-xylulose 5-phosphate: step 2/6. Catalyzes the formation of 4-diphosphocytidyl-2-C-methyl-D-erythritol from CTP and 2-C-methyl-D-erythritol 4-phosphate (MEP). The chain is 2-C-methyl-D-erythritol 4-phosphate cytidylyltransferase from Deinococcus radiodurans (strain ATCC 13939 / DSM 20539 / JCM 16871 / CCUG 27074 / LMG 4051 / NBRC 15346 / NCIMB 9279 / VKM B-1422 / R1).